The following is a 95-amino-acid chain: Aspartyl/glutamyl-tRNA(Asn/Gln) amidotransferase subunit C (95 aa).

It belongs to the GatC family. In terms of assembly, heterotrimer of A, B and C subunits.

It catalyses the reaction L-glutamyl-tRNA(Gln) + L-glutamine + ATP + H2O = L-glutaminyl-tRNA(Gln) + L-glutamate + ADP + phosphate + H(+). It carries out the reaction L-aspartyl-tRNA(Asn) + L-glutamine + ATP + H2O = L-asparaginyl-tRNA(Asn) + L-glutamate + ADP + phosphate + 2 H(+). Allows the formation of correctly charged Asn-tRNA(Asn) or Gln-tRNA(Gln) through the transamidation of misacylated Asp-tRNA(Asn) or Glu-tRNA(Gln) in organisms which lack either or both of asparaginyl-tRNA or glutaminyl-tRNA synthetases. The reaction takes place in the presence of glutamine and ATP through an activated phospho-Asp-tRNA(Asn) or phospho-Glu-tRNA(Gln). This Rhodospirillum centenum (strain ATCC 51521 / SW) protein is Aspartyl/glutamyl-tRNA(Asn/Gln) amidotransferase subunit C.